The sequence spans 1218 residues: NACHT, LRR and PYD domains-containing protein 1 allele 2 (1218 aa).

Residues 1–61 are disordered; it reads MEESQSKQES…SLPGWSSTSK (61 aa). Residues 7–29 are compositionally biased toward polar residues; the sequence is KQESNTRVAQHGSQQDVDPTFQT. The NACHT domain occupies 175-484; it reads QLVIIEGAAG…EFFAAMSYIL (310 aa). 181–188 lines the ATP pocket; the sequence is GAAGIGKS. LRR repeat units lie at residues 343-364, 673-693, and 730-750; these read KERNTIIDFNLIGSIPVLLTLC, NLEELDLSGNPLSYSAVRSLC, and RLAELDLRLNDLGDNGVRQLC. Positions 799 to 815 are enriched in polar residues; sequence TMPTENTDGEESLTSSK. The segment at 799-842 is disordered; that stretch reads TMPTENTDGEESLTSSKQQQQQSGDKHMEPLGTDDDFWGPSGPV. The segment at 835–968 is ZU5; it reads FWGPSGPVST…HFAVLENPSF (134 aa). An FIIND domain is found at 835-1118; sequence FWGPSGPVST…LRPALPRMAS (284 aa). Positions 969-1118 are UPA; the sequence is SPMGVLLRMI…LRPALPRMAS (150 aa). One can recognise a CARD domain in the interval 1122–1211; sequence DAPALLHFVD…HLIMDLLEKS (90 aa).

The protein belongs to the NLRP family. As to quaternary structure, interacts (via LRR repeats) with BCL2 and BCL2L1 (via the loop between motifs BH4 and BH3). Interacts with NOD2; this interaction is enhanced in the presence of muramyl dipeptide (MDP) and increases IL1B release. Interacts with EIF2AK2/PKR; this interaction requires EIF2AK2 activity, is accompanied by EIF2AK2 autophosphorylation and promotes inflammasome assembly in response to danger-associated signals. Interacts with MEFV; this interaction targets Nlrp1a to degradation by autophagy, hence preventing excessive IL1B- and IL18-mediated inflammation. Interacts with DPP9; leading to inhibit activation of the inflammasome. DPP9 acts via formation of a ternary complex, composed of a DPP9 homodimer, one full-length NLRP1 protein, and one cleaved C-terminus of Nlrp1a (NACHT, LRR and PYD domains-containing protein 1a, C-terminus). Interacts with DPP8; leading to inhibit activation of the inflammasome, probably via formation of a ternary complex with DPP8. Interacts with the C-terminal part of Nlrp1a (NACHT, LRR and PYD domains-containing protein 1a, C-terminus) in absence of pathogens and other damage-associated signals. In terms of assembly, interacts with the N-terminal part of Nlrp1a (NACHT, LRR and PYD domains-containing protein 1a, N-terminus) in absence of pathogens and other damage-associated signals. Homomultimer; forms the Nlrp1a inflammasome polymeric complex, a filament composed of homopolymers of this form in response to pathogens and other damage-associated signals. The Nlrp1a inflammasome polymeric complex directly recruits pro-caspase-1 (proCASP1) independently of PYCARD/ASC. Interacts (via CARD domain) with CASP1 (via CARD domain); leading to CASP1 activation. Post-translationally, autocatalytically cleaved. Autocatalytic cleavage in FIIND region occurs constitutively, prior to activation signals, and is required for inflammasome activity (IL1B release), possibly by facilitating CASP1 binding. Both N- and C-terminal parts remain associated non-covalently. (Microbial infection) Cleavage by B.anthracis lethal toxin (LT) endopeptidase promotes ubiquitination and degradation of the N-terminal part, releasing the cleaved C-terminal part of the protein (NACHT, LRR and PYD domains-containing protein 1a, C-terminus), which polymerizes and forms the Nlrp1a inflammasome. In terms of processing, ubiquitinated in response to pathogen-associated signals, leading to its degradation by the proteasome and subsequent release of the cleaved C-terminal part of the protein (NACHT, LRR and PYD domains-containing protein 1a, C-terminus), which polymerizes and forms the Nlrp1a inflammasome.

The protein resides in the cytoplasm. It is found in the cytosol. It localises to the nucleus. The protein localises to the inflammasome. Its activity is regulated as follows. Activated by cleavage by B.anthracis lethal toxin (LT) endopeptidase. Cleavage by LT promotes ubiquitination and degradation of the N-terminal part, releasing the cleaved C-terminal part of the protein (NACHT, LRR and PYD domains-containing protein 1a, C-terminus), which polymerizes and forms the Nlrp1a inflammasome. Nlrp1a inflammasome is inhibited by DPP8 and DPP9, which sequester the C-terminal fragment of Nlrp1a (NACHT, LRR and PYD domains-containing protein 1a, C-terminus) in a ternary complex, thereby preventing Nlrp1a oligomerization and activation. Nlrp1a inflammasome is weakly activated by Val-boroPro (Talabostat, PT-100), an inhibitor of dipeptidyl peptidases DPP8 and DPP9. Val-boroPro relieves inhibition of DPP8 and/or DPP9 by promoting disruption of the ternary complex, releasing its C-terminal part from autoinhibition. Weakly activated by Toxoplasma gondii. Acts as the sensor component of the Nlrp1a inflammasome, which mediates inflammasome activation in response to various pathogen-associated signals, leading to subsequent pyroptosis. Inflammasomes are supramolecular complexes that assemble in the cytosol in response to pathogens and other damage-associated signals and play critical roles in innate immunity and inflammation. Acts as a recognition receptor (PRR): recognizes specific pathogens and other damage-associated signals, such as B.anthracis lethal toxin (LT) or Val-boroPro inhibitor, and mediates the formation of the inflammasome polymeric complex. In response to pathogen-associated signals, the N-terminal part of Nlrp1a is degraded by the proteasome, releasing the cleaved C-terminal part of the protein (NACHT, LRR and PYD domains-containing protein 1a, C-terminus), which polymerizes to initiate the formation of the inflammasome complex: the inflammasome directly recruits pro-caspase-1 (proCASP1) independently of PYCARD/ASC and promotes caspase-1 (CASP1) activation, which subsequently cleaves and activates inflammatory cytokines IL1B and IL18 and gasdermin-D (GSDMD), leading to pyroptosis. In the absence of GSDMD expression, the Nlrp1a inflammasome is able to recruit and activate CASP8, leading to activation of gasdermin-E (GSDME). Functionally, constitutes the precursor of the Nlrp1a inflammasome, which mediates autoproteolytic processing within the FIIND domain to generate the N-terminal and C-terminal parts, which are associated non-covalently in absence of pathogens and other damage-associated signals. Its function is as follows. Regulatory part that prevents formation of the Nlrp1a inflammasome: in absence of pathogens and other damage-associated signals, interacts with the C-terminal part of Nlrp1a (NACHT, LRR and PYD domains-containing protein 1a, C-terminus), preventing activation of the Nlrp1a inflammasome. In response to pathogen-associated signals, this part is ubiquitinated by the N-end rule pathway and degraded by the proteasome, releasing the cleaved C-terminal part of the protein, which polymerizes and forms the Nlrp1a inflammasome. In terms of biological role, constitutes the active part of the Nlrp1a inflammasome. In absence of pathogens and other damage-associated signals, interacts with the N-terminal part of Nlrp1a (NACHT, LRR and PYD domains-containing protein 1a, N-terminus), preventing activation of the Nlrp1a inflammasome. In response to pathogen-associated signals, the N-terminal part of Nlrp1a is degraded by the proteasome, releasing this form, which polymerizes to form the Nlrp1a inflammasome complex: the Nlrp1a inflammasome complex then directly recruits pro-caspase-1 (proCASP1) and promotes caspase-1 (CASP1) activation, leading to gasdermin-D (GSDMD) cleavage and subsequent pyroptosis. In Rattus norvegicus (Rat), this protein is NACHT, LRR and PYD domains-containing protein 1 allele 2.